An 86-amino-acid chain; its full sequence is Small ribosomal subunit protein bS16 (86 aa).

It belongs to the bacterial ribosomal protein bS16 family.

The sequence is that of Small ribosomal subunit protein bS16 from Xylella fastidiosa (strain M12).